We begin with the raw amino-acid sequence, 84 residues long: Large ribosomal subunit protein bL27 (84 aa).

The disordered stretch occupies residues 1–21; that stretch reads MAHKKGASSTRNGRDSNAQRL. The segment covering 7–19 has biased composition (polar residues); sequence ASSTRNGRDSNAQ.

It belongs to the bacterial ribosomal protein bL27 family.

In Clavibacter sepedonicus (Clavibacter michiganensis subsp. sepedonicus), this protein is Large ribosomal subunit protein bL27.